A 346-amino-acid chain; its full sequence is Peripherin-2 (346 aa).

Residues 1–24 (MALLKVKFDQKKRVKLAQGLWLMN) are Cytoplasmic-facing. A helical membrane pass occupies residues 25–43 (WLSVLAGIVLFSLGLFLKI). Over 44–61 (ELRKRSEVMNNSESHFVP) the chain is Lumenal. Asparagine 53 carries an N-linked (GlcNAc...) asparagine glycan. Residues 62–80 (NSLIGVGVLSCVFNSLAGK) form a helical membrane-spanning segment. Residues 81–99 (ICYDALDPAKYAKWKPWLK) are Cytoplasmic-facing. A helical transmembrane segment spans residues 100-123 (PYLAVCIFFNVILFLVALCCFLLR). Residues 124-264 (GSLESTLAYG…LNYYSSLMNS (141 aa)) lie on the Lumenal side of the membrane. An N-linked (GlcNAc...) asparagine glycan is attached at asparagine 229. A helical transmembrane segment spans residues 265–290 (MGVVTLLVWLFEVSITAGLRYLHTAL). The Cytoplasmic segment spans residues 291–346 (ESVSNPEDPECESEGWLLEKSVPETWKAFLESFKKLGKSNQVEAEGADAGPAPEAG). Residues 341 to 346 (PAPEAG) form an interaction with MREG region.

Belongs to the PRPH2/ROM1 family. As to quaternary structure, homodimer; disulfide-linked. Forms a homotetramer. Forms a heterotetramer with ROM1. Homotetramer and heterotetramer core complexes go on to form higher order complexes by formation of intermolecular disulfide bonds. Interacts with MREG. Interacts with STX3 isoform 3B. Interacts with SNAP25. In terms of tissue distribution, expressed in the retina (at protein level).

It localises to the membrane. The protein resides in the cell projection. Its subcellular location is the cilium. The protein localises to the photoreceptor outer segment. It is found in the photoreceptor inner segment. In terms of biological role, essential for retina photoreceptor outer segment disk morphogenesis, may also play a role with ROM1 in the maintenance of outer segment disk structure. Required for the maintenance of retinal outer nuclear layer thickness. Required for the correct development and organization of the photoreceptor inner segment. This is Peripherin-2 (Prph2) from Mus musculus (Mouse).